A 130-amino-acid chain; its full sequence is Small ribosomal subunit protein uS11 (130 aa).

It belongs to the universal ribosomal protein uS11 family. Part of the 30S ribosomal subunit. Interacts with proteins S7 and S18. Binds to IF-3.

Located on the platform of the 30S subunit, it bridges several disparate RNA helices of the 16S rRNA. Forms part of the Shine-Dalgarno cleft in the 70S ribosome. The chain is Small ribosomal subunit protein uS11 from Syntrophomonas wolfei subsp. wolfei (strain DSM 2245B / Goettingen).